The sequence spans 221 residues: NEDD4 family-interacting protein 1 (221 aa).

A2 carries the N-acetylalanine modification. An interaction with UBE2L3 region spans residues 2–41 (ALALAALAAVEPACGTGYQQLQNEEEPGEREQTAGDAPPP). Over 2 to 116 (ALALAALAAV…ADQLRIGNDG (115 aa)) the chain is Cytoplasmic. The segment at 15 to 45 (CGTGYQQLQNEEEPGEREQTAGDAPPPYSSI) is disordered. Short sequence motifs (PPxY motif) lie at residues 39-42 (PPPY), 64-67 (PPSY), and 74-76 (PSY). Residues 42–76 (YSSISAESAAYFDYKDESGFPKPPSYNVATTLPSY) form an interaction with ITCH region. The chain crosses the membrane as a helical span at residues 117–137 (IFMLTFFMAFLFNWIGFFLSF). Residues 138–143 (CLTTSA) are Extracellular-facing. The helical transmembrane segment at 144–164 (AGRYGAISGFGLSLIKWILIV) threads the bilayer. Residues 165-172 (RFSTYFPG) are Cytoplasmic-facing. The chain crosses the membrane as a helical span at residues 173-193 (YFDGQYWLWWVFLVLGFLLFL). Residues 194–221 (RGFINYAKVRKMPETFSNLPRTRVLFIY) lie on the Extracellular side of the membrane.

As to quaternary structure, forms heterodimers with NDFIP2. Interacts with several E3 ubiquitin-protein ligases, including ITCH, NEDD4, NEDD4L and WWP2. The interaction with NEDD4, NEDD4L and ITCH leads to relocalization of these proteins to exosomes and eventually to exosomal secretion. Interacts with SR1402. Interacts with SLC11A2/DMT1. Interacts with PTEN. May interact with phosphorylated EGFR. Interacts with BRAT1. Interacts with KCNH2. Interacts with MAVS. Part of a complex containing ITCH, NDFIP1 and MAP3K7. Interacts (via N-terminus) with UBE2L3; the interaction mediates recruitment of UBE2L3 to ITCH. In terms of processing, ubiquitinated by NEDD4; mono-, di- and polyubiquitinated forms are detected. Ubiquitination regulates its degradation. Post-translationally, undergoes transient tyrosine phosphorylation following EGF stimulation, most probably by catalyzed by SRC. Phosphorylation SRC is enhanced in the presence of NDFIP2 which may act as a scaffold to recruit SRC to NDFIP1.

It localises to the endosome membrane. The protein resides in the golgi apparatus membrane. The protein localises to the synapse. Its subcellular location is the synaptosome. It is found in the cell projection. It localises to the dendrite. The protein resides in the secreted. Its function is as follows. Activates HECT domain-containing E3 ubiquitin-protein ligases, including NEDD4 and ITCH, and consequently modulates the stability of their targets. As a result, controls many cellular processes. Prevents chronic T-helper cell-mediated inflammation by activating ITCH and thus controlling JUNB degradation. Promotes pancreatic beta cell death through degradation of JUNB and inhibition of the unfolded protein response, leading to reduction of insulin secretion. Restricts the production of pro-inflammatory cytokines in effector Th17 T-cells by promoting ITCH-mediated ubiquitination degradation of RORC. Together with NDFIP2, limits the cytokine signaling and expansion of effector Th2 T-cells by promoting degradation of JAK1, probably by ITCH- and NEDD4L-mediated ubiquitination. Regulates peripheral T-cell tolerance to self and foreign antigens, forcing the exit of naive CD4+ T-cells from the cell cycle before they become effector T-cells. Negatively regulates RLR-mediated antiviral response by promoting SMURF1-mediated ubiquitination and subsequent degradation of MAVS. Negatively regulates KCNH2 potassium channel activity by decreasing its cell-surface expression and interfering with channel maturation through recruitment of NEDD4L to the Golgi apparatus where it mediates KCNH2 degradation. In cortical neurons, mediates the ubiquitination of the divalent metal transporter SLC11A2/DMT1 by NEDD4L, leading to its down-regulation and protection of the cells from cobalt and iron toxicity. Important for normal development of dendrites and dendritic spines in cortex. Enhances the ubiquitination of BRAT1 mediated by: NEDD4, NEDD4L and ITCH and is required for the nuclear localization of ubiquitinated BRAT1. Enhances the ITCH-mediated ubiquitination of MAP3K7 by recruiting E2 ubiquitin-conjugating enzyme UBE2L3 to ITCH. Modulates EGFR signaling through multiple pathways. In particular, may regulate the ratio of AKT1-to-MAPK8 signaling in response to EGF, acting on AKT1 probably through PTEN destabilization and on MAPK8 through ITCH-dependent MAP2K4 inactivation. As a result, may control cell growth rate. Inhibits cell proliferation by promoting PTEN nuclear localization and changing its signaling specificity. The sequence is that of NEDD4 family-interacting protein 1 (Ndfip1) from Rattus norvegicus (Rat).